The chain runs to 147 residues: Acireductone dioxygenase (147 aa).

Histidine 74, histidine 76, glutamate 80, and histidine 119 together coordinate Fe(2+). Ni(2+) is bound by residues histidine 74, histidine 76, glutamate 80, and histidine 119.

It belongs to the acireductone dioxygenase (ARD) family. It depends on Fe(2+) as a cofactor. Requires Ni(2+) as cofactor.

The protein localises to the cytoplasm. It localises to the nucleus. It carries out the reaction 1,2-dihydroxy-5-(methylsulfanyl)pent-1-en-3-one + O2 = 4-methylsulfanyl-2-oxobutanoate + formate + 2 H(+). The catalysed reaction is 1,2-dihydroxy-5-(methylsulfanyl)pent-1-en-3-one + O2 = 3-(methylsulfanyl)propanoate + CO + formate + 2 H(+). It participates in amino-acid biosynthesis; L-methionine biosynthesis via salvage pathway; L-methionine from S-methyl-5-thio-alpha-D-ribose 1-phosphate: step 5/6. In terms of biological role, catalyzes 2 different reactions between oxygen and the acireductone 1,2-dihydroxy-3-keto-5-methylthiopentene (DHK-MTPene) depending upon the metal bound in the active site. Fe-containing acireductone dioxygenase (Fe-ARD) produces formate and 2-keto-4-methylthiobutyrate (KMTB), the alpha-ketoacid precursor of methionine in the methionine recycle pathway. Ni-containing acireductone dioxygenase (Ni-ARD) produces methylthiopropionate, carbon monoxide and formate, and does not lie on the methionine recycle pathway. In Dictyostelium discoideum (Social amoeba), this protein is Acireductone dioxygenase (adi1).